The following is a 321-amino-acid chain: uncharacterized protein (321 aa).

Helical transmembrane passes span 6-26, 37-57, 72-92, 100-120, 134-154, 160-180, 196-216, 223-243, 255-275, and 277-297; these read LFIG…MFPV, FYFS…LLLV, WIIL…FLGQ, IMTA…ILWG, ILIA…SFFF, LFSI…TMGG, CLFG…QGYV, VIAA…IIAL, SING…IMVI, and GYNI…GLIL. EamA domains follow at residues 18 to 146 and 175 to 300; these read MSWG…MVIT and VYTM…LNNI.

It belongs to the EamA transporter family.

It localises to the cell membrane. This is an uncharacterized protein from Bacillus subtilis (strain 168).